The following is a 258-amino-acid chain: Zinc import ATP-binding protein ZnuC (258 aa).

One can recognise an ABC transporter domain in the interval 7-233 (ITAKNINHAY…PAFQELFGQG (227 aa)). 39–46 (GPNGAGKS) is an ATP binding site.

Belongs to the ABC transporter superfamily. Zinc importer (TC 3.A.1.15.5) family. The complex is composed of two ATP-binding proteins (ZnuC), two transmembrane proteins (ZnuB) and a solute-binding protein (ZnuA).

The protein localises to the cell inner membrane. It carries out the reaction Zn(2+)(out) + ATP(in) + H2O(in) = Zn(2+)(in) + ADP(in) + phosphate(in) + H(+)(in). Part of the ABC transporter complex ZnuABC involved in zinc import. Responsible for energy coupling to the transport system. The polypeptide is Zinc import ATP-binding protein ZnuC (Hydrogenovibrio crunogenus (strain DSM 25203 / XCL-2) (Thiomicrospira crunogena)).